Here is a 513-residue protein sequence, read N- to C-terminus: uncharacterized protein (513 aa).

Positions 1 to 48 are disordered; it reads MGSSEEQSVPGDDFYEESGDLNTGLSLVLRPAKSNEGESSLSSPKGSK. The span at 37-48 shows a compositional bias: polar residues; sequence GESSLSSPKGSK. 3 positions are modified to phosphoserine: Ser-43, Ser-84, and Ser-123. Disordered regions lie at residues 210 to 229, 236 to 287, 390 to 414, and 453 to 481; these read DGNHGNQAKNSGPAETGDLA, TRDS…GSKS, AKEDTDSTRDPSSQVQFPTHRAEPP, and SVLSGDQEEPVGLPAPDSEILQLPGTQGC.

This is an uncharacterized protein from Mus musculus (Mouse).